Consider the following 187-residue polypeptide: Isopentenyl-diphosphate Delta-isomerase (187 aa).

Residues histidine 36, histidine 43, and histidine 80 each contribute to the Mn(2+) site. In terms of domain architecture, Nudix hydrolase spans 41 to 178; that stretch reads VRHRAFTALL…RQLRLCPWFE (138 aa). Glutamate 98 is a Mg(2+) binding site. The Mn(2+) site is built by glutamate 127 and glutamate 129. Glutamate 129 is a catalytic residue.

The protein belongs to the IPP isomerase type 1 family. Requires Mg(2+) as cofactor. It depends on Mn(2+) as a cofactor.

It localises to the cytoplasm. It catalyses the reaction isopentenyl diphosphate = dimethylallyl diphosphate. It functions in the pathway isoprenoid biosynthesis; dimethylallyl diphosphate biosynthesis; dimethylallyl diphosphate from isopentenyl diphosphate: step 1/1. In terms of biological role, catalyzes the 1,3-allylic rearrangement of the homoallylic substrate isopentenyl (IPP) to its highly electrophilic allylic isomer, dimethylallyl diphosphate (DMAPP). The sequence is that of Isopentenyl-diphosphate Delta-isomerase from Haloarcula marismortui (strain ATCC 43049 / DSM 3752 / JCM 8966 / VKM B-1809) (Halobacterium marismortui).